Reading from the N-terminus, the 236-residue chain is tRNA (guanine-N(7)-)-methyltransferase (236 aa).

S-adenosyl-L-methionine is bound by residues Asp-35, Glu-60, Asn-87, and Asp-113. Residue Asp-113 is part of the active site. Residues Lys-117 and Asp-149 each contribute to the substrate site.

This sequence belongs to the class I-like SAM-binding methyltransferase superfamily. TrmB family.

It catalyses the reaction guanosine(46) in tRNA + S-adenosyl-L-methionine = N(7)-methylguanosine(46) in tRNA + S-adenosyl-L-homocysteine. The protein operates within tRNA modification; N(7)-methylguanine-tRNA biosynthesis. Functionally, catalyzes the formation of N(7)-methylguanine at position 46 (m7G46) in tRNA. This Parasynechococcus marenigrum (strain WH8102) protein is tRNA (guanine-N(7)-)-methyltransferase.